The following is a 103-amino-acid chain: RNA-binding protein YlxQ (103 aa).

This sequence belongs to the eukaryotic ribosomal protein eL8 family.

Functionally, RNA-binding protein that recognizes the K-turn motif present in ribosomal RNA, but also in box C/D and box C'/D' sRNAs. The sequence is that of RNA-binding protein YlxQ from Enterococcus faecium (Streptococcus faecium).